The following is a 186-amino-acid chain: PRKR-interacting protein 1 (186 aa).

The tract at residues 1 to 50 (MASSAASSVRPPRPKKEPQALIIPKNAAEEQKLKLERLMKNPDKAVPIPE) is interaction with EIF2AK2. Disordered regions lie at residues 39–61 (MKNPDKAVPIPEKMSEWAPRPPP) and 119–186 (AAEE…ITGR). Positions 51-143 (KMSEWAPRPP…LKEKKLLAKK (93 aa)) are required for RNA-binding. A coiled-coil region spans residues 86–153 (RRREYQRQDY…MKLEQKKQSE (68 aa)). Positions 126–138 (KRRKKRQKLKEKK) are required for nuclear localization. The span at 126 to 143 (KRRKKRQKLKEKKLLAKK) shows a compositional bias: basic residues. Positions 153 to 162 (EASSETQEQP) are enriched in polar residues. Residues 170-179 (SGTEDEEEDA) are compositionally biased toward acidic residues.

It belongs to the PRKRIP1 family. In terms of assembly, component of the pre-catalytic and post-catalytic spliceosome complexes. Interacts with EIF2AK2.

The protein resides in the nucleus. It is found in the nucleolus. Required for pre-mRNA splicing as component of the spliceosome. Binds double-stranded RNA. Inhibits EIF2AK2 kinase activity. In Bos taurus (Bovine), this protein is PRKR-interacting protein 1 (PRKRIP1).